The chain runs to 34 residues: Brevinin-2Ec (34 aa).

C28 and C34 are disulfide-bonded.

The protein belongs to the frog skin active peptide (FSAP) family. Brevinin subfamily. Expressed by the skin glands.

Its subcellular location is the secreted. Shows antibacterial activity against representative Gram-negative and Gram-positive bacterial species, and hemolytic activity. The polypeptide is Brevinin-2Ec (Pelophylax lessonae (Pool frog)).